The sequence spans 777 residues: E3 UFM1-protein ligase 1 homolog (777 aa).

Residues 396-417 show a composition bias toward basic and acidic residues; the sequence is MKHQDPMDRDSAVGEGKADKRE. The segment at 396 to 470 is disordered; it reads MKHQDPMDRD…PSGGKKGGKD (75 aa).

The protein belongs to the UFL1 family.

Functionally, E3 UFM1-protein ligase that mediates ufmylation of target proteins. This chain is E3 UFM1-protein ligase 1 homolog, found in Aedes aegypti (Yellowfever mosquito).